The primary structure comprises 282 residues: Insulin-like growth factor-binding protein 7 (282 aa).

Positions Met-1–Ser-26 are cleaved as a signal peptide. An IGFBP N-terminal domain is found at Ser-28–Lys-114. 7 cysteine pairs are disulfide-bonded: Cys-32/Cys-57, Cys-35/Cys-59, Cys-40/Cys-60, Cys-48/Cys-63, Cys-71/Cys-87, Cys-81/Cys-111, and Cys-120/Cys-156. Positions Pro-105–Gln-158 constitute a Kazal-like domain. In terms of domain architecture, Ig-like C2-type spans Pro-160–Thr-264. An N-linked (GlcNAc...) asparagine glycan is attached at Asn-171. Residues Cys-181 and Cys-248 are joined by a disulfide bond. A Phosphoserine; by FAM20C modification is found at Ser-239.

In terms of assembly, may interact with VPS24/CHMP3; the relevance of such interaction however remains unclear. Interacts with CD93; this interaction plays a role in endothelial cells angiogenesis. Post-translationally, N-glycosylated.

It localises to the secreted. Binds IGF1 and IGF2 with a relatively low affinity. Stimulates prostacyclin (PGI2) production. Stimulates cell adhesion. Acts as a ligand for CD93 to play a role in angiogenesis. This chain is Insulin-like growth factor-binding protein 7 (IGFBP7), found in Homo sapiens (Human).